The sequence spans 386 residues: Probable copper-dependent oxygenase M1 (386 aa).

Residues 1–22 (MLRMKKICTAFLTIALCTHVLA) form the signal peptide. Asn-86 carries N-linked (GlcNAc...) asparagine glycosylation. Residues 334–354 (FVVPIAAIAFIALTIGAGYVF) traverse the membrane as a helical segment.

The protein belongs to the clz3 oxygenase family.

Its subcellular location is the membrane. It participates in secondary metabolite biosynthesis. Its function is as follows. Probable copper-dependent oxygenase; part of the gene cluster that mediates the biosynthesis of squalestatin S1 (SQS1, also known as zaragozic acid A), a heavily oxidized fungal polyketide that offers potent cholesterol lowering activity by targeting squalene synthase (SS). SQS1 is composed of a 2,8-dioxobicyclic[3.2.1]octane-3,4,5-tricarboxyclic acid core that is connected to two lipophilic polyketide arms. These initial steps feature the priming of an unusual benzoic acid starter unit onto the highly reducing polyketide synthase pks2, followed by oxaloacetate extension and product release to generate a tricarboxylic acid containing product. The phenylalanine ammonia lyase (PAL) M7 and the acyl-CoA ligase M9 are involved in transforming phenylalanine into benzoyl-CoA. The citrate synthase-like protein R3 is involved in connecting the C-alpha-carbons of the hexaketide chain and oxaloacetate to afford the tricarboxylic acid unit. The potential hydrolytic enzymes, M8 and M10, are in close proximity to pks2 and may participate in product release. On the other side, the tetraketide arm is synthesized by a the squalestatin tetraketide synthase pks1 and enzymatically esterified to the core in the last biosynthetic step, by the acetyltransferase M4. The biosynthesis of the tetraketide must involve 3 rounds of chain extension. After the first and second rounds methyl-transfer occurs, and in all rounds of extension the ketoreductase and dehydratase are active. The enoyl reductase and C-MeT of pks1 are not active in the final round of extension. The acetyltransferase M4 appears to have a broad substrate selectivity for its acyl CoA substrate, allowing the in vitro synthesis of novel squalestatins. The biosynthesis of SQS1 requires several oxidative steps likely performed by oxidoreductases M1, R1 and R2. Finally, in support of the identification of the cluster as being responsible for SQS1 production, the cluster contains a gene encoding a putative squalene synthase (SS) R6, suggesting a likely mechanism for self-resistance. This chain is Probable copper-dependent oxygenase M1, found in Phoma sp. (strain ATCC 20986 / MF5453).